Consider the following 551-residue polypeptide: Glucans biosynthesis protein D (551 aa).

The segment at residues 1–32 (MDRRRFIKGSMAMAAVCGTSGIASLFSQAAFA) is a signal peptide (tat-type signal).

This sequence belongs to the OpgD/OpgG family. Predicted to be exported by the Tat system. The position of the signal peptide cleavage has not been experimentally proven.

The protein localises to the periplasm. The protein operates within glycan metabolism; osmoregulated periplasmic glucan (OPG) biosynthesis. Functionally, probably involved in the control of the structural glucose backbone of osmoregulated periplasmic glucans (OPGs). The polypeptide is Glucans biosynthesis protein D (Shigella dysenteriae serotype 1 (strain Sd197)).